A 349-amino-acid polypeptide reads, in one-letter code: tRNA uridine(34) hydroxylase (349 aa).

Positions 146-240 (DDPDAVFIDM…YARKAREQGL (95 aa)) constitute a Rhodanese domain. The Cysteine persulfide intermediate role is filled by cysteine 200. The segment covering 314 to 328 (PEEEQRRRRAGRENG) has biased composition (basic and acidic residues). Residues 314-349 (PEEEQRRRRAGRENGNKIFNKSRGRLNTTLGIPDPE) form a disordered region.

This sequence belongs to the TrhO family.

It carries out the reaction uridine(34) in tRNA + AH2 + O2 = 5-hydroxyuridine(34) in tRNA + A + H2O. Functionally, catalyzes oxygen-dependent 5-hydroxyuridine (ho5U) modification at position 34 in tRNAs. The chain is tRNA uridine(34) hydroxylase from Cronobacter sakazakii (strain ATCC BAA-894) (Enterobacter sakazakii).